Reading from the N-terminus, the 62-residue chain is Small ribosomal subunit protein eS31 (62 aa).

Zn(2+) is bound by residues cysteine 29, cysteine 32, cysteine 48, and cysteine 51. The segment at 29 to 51 (CPRCGSFMAFHKWPVPRWHCGKC) adopts a C4-type zinc-finger fold.

This sequence belongs to the eukaryotic ribosomal protein eS31 family. Part of the 30S ribosomal subunit. Zn(2+) is required as a cofactor.

This Hyperthermus butylicus (strain DSM 5456 / JCM 9403 / PLM1-5) protein is Small ribosomal subunit protein eS31.